Consider the following 230-residue polypeptide: Maleylacetoacetate isomerase (230 aa).

Residues 7 to 95 (LRVTLYTYFR…YLDEAFPDNP (89 aa)) form the GST N-terminal domain. Glutathione contacts are provided by residues 17 to 22 (SSCSAR), Gln-46, Val-60, 79 to 80 (QS), Gln-123, and 127 to 129 (NLR). Positions 104-226 (NPQQRALVRS…HWRTQQDTPT (123 aa)) constitute a GST C-terminal domain.

This sequence belongs to the GST superfamily. Zeta family. The cofactor is glutathione.

The protein resides in the cytoplasm. The catalysed reaction is 4-maleylacetoacetate = 4-fumarylacetoacetate. The protein operates within amino-acid degradation; L-phenylalanine degradation; acetoacetate and fumarate from L-phenylalanine: step 5/6. This Emericella nidulans (strain FGSC A4 / ATCC 38163 / CBS 112.46 / NRRL 194 / M139) (Aspergillus nidulans) protein is Maleylacetoacetate isomerase (maiA).